Here is a 648-residue protein sequence, read N- to C-terminus: DNA mismatch repair protein MutL (648 aa).

Positions 385–430 are disordered; it reads STVKGPAVNEPLTENTLNQQKVKTSASTPVVHTGNSVEPKPETSTA. Residues 396–430 show a composition bias toward polar residues; sequence LTENTLNQQKVKTSASTPVVHTGNSVEPKPETSTA.

This sequence belongs to the DNA mismatch repair MutL/HexB family.

Functionally, this protein is involved in the repair of mismatches in DNA. It is required for dam-dependent methyl-directed DNA mismatch repair. May act as a 'molecular matchmaker', a protein that promotes the formation of a stable complex between two or more DNA-binding proteins in an ATP-dependent manner without itself being part of a final effector complex. The polypeptide is DNA mismatch repair protein MutL (Agathobacter rectalis (strain ATCC 33656 / DSM 3377 / JCM 17463 / KCTC 5835 / VPI 0990) (Eubacterium rectale)).